The chain runs to 257 residues: Zinc transporter ZupT (257 aa).

8 helical membrane-spanning segments follow: residues 5 to 25, 32 to 52, 61 to 81, 109 to 129, 137 to 157, 171 to 191, 195 to 215, and 236 to 256; these read LILT…GVLG, VLAF…LMEM, GMSP…YFGL, AILL…ATFV, LGFG…LAVA, IFWA…AWLI, LVSP…MVAL, and GVLC…TIGI. Residues Asn-120 and Glu-123 each contribute to the Fe(2+) site. Positions 123 and 148 each coordinate Zn(2+). 3 residues coordinate Fe(2+): Asn-149, Glu-152, and Glu-181. Glu-152 contributes to the Zn(2+) binding site.

The protein belongs to the ZIP transporter (TC 2.A.5) family. ZupT subfamily.

Its subcellular location is the cell inner membrane. It carries out the reaction Zn(2+)(in) = Zn(2+)(out). Its function is as follows. Mediates zinc uptake. May also transport other divalent cations. This Salmonella heidelberg (strain SL476) protein is Zinc transporter ZupT.